The sequence spans 196 residues: Protein GrpE (196 aa).

The interval 1–41 is disordered; the sequence is MSSKEQKTPEGQAPEEIITEQHDDVEAVEPEVSAEQVDPRD.

It belongs to the GrpE family. Homodimer.

The protein resides in the cytoplasm. Participates actively in the response to hyperosmotic and heat shock by preventing the aggregation of stress-denatured proteins, in association with DnaK and GrpE. It is the nucleotide exchange factor for DnaK and may function as a thermosensor. Unfolded proteins bind initially to DnaJ; upon interaction with the DnaJ-bound protein, DnaK hydrolyzes its bound ATP, resulting in the formation of a stable complex. GrpE releases ADP from DnaK; ATP binding to DnaK triggers the release of the substrate protein, thus completing the reaction cycle. Several rounds of ATP-dependent interactions between DnaJ, DnaK and GrpE are required for fully efficient folding. The protein is Protein GrpE of Klebsiella pneumoniae (strain 342).